The sequence spans 256 residues: GTP cyclohydrolase FolE2 (256 aa).

The protein belongs to the GTP cyclohydrolase IV family.

The enzyme catalyses GTP + H2O = 7,8-dihydroneopterin 3'-triphosphate + formate + H(+). It participates in cofactor biosynthesis; 7,8-dihydroneopterin triphosphate biosynthesis; 7,8-dihydroneopterin triphosphate from GTP: step 1/1. Converts GTP to 7,8-dihydroneopterin triphosphate. This chain is GTP cyclohydrolase FolE2, found in Caldicellulosiruptor bescii (strain ATCC BAA-1888 / DSM 6725 / KCTC 15123 / Z-1320) (Anaerocellum thermophilum).